A 135-amino-acid polypeptide reads, in one-letter code: Small ribosomal subunit protein uS9 (135 aa).

The span at 102-115 shows a compositional bias: basic and acidic residues; it reads PLKTEGHLSRDPRA. The tract at residues 102 to 135 is disordered; the sequence is PLKTEGHLSRDPRAKERRKYGLKKARKAPQFSKR. The segment covering 116–135 has biased composition (basic residues); that stretch reads KERRKYGLKKARKAPQFSKR.

This sequence belongs to the universal ribosomal protein uS9 family.

The protein is Small ribosomal subunit protein uS9 of Synechococcus sp. (strain CC9311).